Consider the following 432-residue polypeptide: Glutamyl-tRNA reductase (432 aa).

Substrate-binding positions include 49–52, S107, 112–114, and Q118; these read TCNR and ETQ. The active-site Nucleophile is the C50. 186 to 191 lines the NADP(+) pocket; that stretch reads GAGEMG.

Belongs to the glutamyl-tRNA reductase family. Homodimer.

It carries out the reaction (S)-4-amino-5-oxopentanoate + tRNA(Glu) + NADP(+) = L-glutamyl-tRNA(Glu) + NADPH + H(+). It participates in porphyrin-containing compound metabolism; protoporphyrin-IX biosynthesis; 5-aminolevulinate from L-glutamyl-tRNA(Glu): step 1/2. Catalyzes the NADPH-dependent reduction of glutamyl-tRNA(Glu) to glutamate 1-semialdehyde (GSA). The chain is Glutamyl-tRNA reductase from Campylobacter jejuni subsp. jejuni serotype O:6 (strain 81116 / NCTC 11828).